Here is a 74-residue protein sequence, read N- to C-terminus: Small ribosomal subunit protein bS18 (74 aa).

The protein belongs to the bacterial ribosomal protein bS18 family. As to quaternary structure, part of the 30S ribosomal subunit. Forms a tight heterodimer with protein bS6.

In terms of biological role, binds as a heterodimer with protein bS6 to the central domain of the 16S rRNA, where it helps stabilize the platform of the 30S subunit. The chain is Small ribosomal subunit protein bS18 from Natranaerobius thermophilus (strain ATCC BAA-1301 / DSM 18059 / JW/NM-WN-LF).